Reading from the N-terminus, the 274-residue chain is CDC48-associated ubiquitin-like/zinc finger protein 1 (274 aa).

The segment at 12–58 (LDVGKHCAYCRQLDFLPFHCSFCNEDFCSNHRLKEDHHCRWLLEHEE) adopts an AN1-type zinc-finger fold. Cys18, Cys21, Cys31, Cys34, Cys39, His42, His48, and Cys50 together coordinate Zn(2+). A ubiquitin-like region spans residues 170 to 266 (NRIYIWCYLV…KDLDTLYLVH (97 aa)). Ser273 bears the Phosphoserine mark.

As to quaternary structure, interacts (via its ubiquitin-like domain) with CDC48 (via N-terminus). Associates with the 26S proteasome. Specifically interacts with the regulatory particle (RP) subunit RPN2. Exposure to arsenite, a known inducer of protein misfolding resulting in accumulation of polyubiquitinated conjugates, enhances the association with the proteoasome. Binds to ubiquitinated proteins conjugated to a 4 or more molecule ubiquitin chain. Binding to ubiquitinated proteins is zinc-dependent.

The protein resides in the cytoplasm. Its subcellular location is the nucleus. Functionally, promotes efficient arsenite-induced clearance of stress granules (SGs). May have a role in the ubiquitin-proteasome system (UPS) protecting cells from metalloid-induced proteotoxicity. The sequence is that of CDC48-associated ubiquitin-like/zinc finger protein 1 from Saccharomyces cerevisiae (strain ATCC 204508 / S288c) (Baker's yeast).